A 186-amino-acid chain; its full sequence is Peptide deformylase (186 aa).

Fe cation-binding residues include Cys113 and His156. Residue Glu157 is part of the active site. His160 is a binding site for Fe cation.

The protein belongs to the polypeptide deformylase family. Fe(2+) is required as a cofactor.

It catalyses the reaction N-terminal N-formyl-L-methionyl-[peptide] + H2O = N-terminal L-methionyl-[peptide] + formate. Functionally, removes the formyl group from the N-terminal Met of newly synthesized proteins. Requires at least a dipeptide for an efficient rate of reaction. N-terminal L-methionine is a prerequisite for activity but the enzyme has broad specificity at other positions. This is Peptide deformylase from Levilactobacillus brevis (strain ATCC 367 / BCRC 12310 / CIP 105137 / JCM 1170 / LMG 11437 / NCIMB 947 / NCTC 947) (Lactobacillus brevis).